Reading from the N-terminus, the 70-residue chain is Large ribosomal subunit protein bL31 (70 aa).

Zn(2+) contacts are provided by Cys-16, Cys-18, Cys-37, and Cys-40.

Belongs to the bacterial ribosomal protein bL31 family. Type A subfamily. Part of the 50S ribosomal subunit. Zn(2+) serves as cofactor.

Binds the 23S rRNA. This is Large ribosomal subunit protein bL31 from Saccharophagus degradans (strain 2-40 / ATCC 43961 / DSM 17024).